We begin with the raw amino-acid sequence, 140 residues long: Ribosome maturation factor RimP (140 aa).

Belongs to the RimP family.

The protein localises to the cytoplasm. Its function is as follows. Required for maturation of 30S ribosomal subunits. This is Ribosome maturation factor RimP from Campylobacter jejuni subsp. jejuni serotype O:6 (strain 81116 / NCTC 11828).